Consider the following 335-residue polypeptide: Aspartate--ammonia ligase (335 aa).

This sequence belongs to the class-II aminoacyl-tRNA synthetase family. AsnA subfamily.

It localises to the cytoplasm. The catalysed reaction is L-aspartate + NH4(+) + ATP = L-asparagine + AMP + diphosphate + H(+). It participates in amino-acid biosynthesis; L-asparagine biosynthesis; L-asparagine from L-aspartate (ammonia route): step 1/1. This chain is Aspartate--ammonia ligase, found in Pediococcus pentosaceus (strain ATCC 25745 / CCUG 21536 / LMG 10740 / 183-1w).